A 1366-amino-acid polypeptide reads, in one-letter code: DNA-directed RNA polymerase subunit beta' (1366 aa).

Over residues 1–23 (MTSSKPKKSSRVRKTTKNSKKNH) the composition is skewed to basic residues. A disordered region spans residues 1–37 (MTSSKPKKSSRVRKTTKNSKKNHNTMMPLLPKTPPSF). The Zn(2+) site is built by Cys248, Cys315, Cys322, and Cys325. Residues 1304–1366 (TAILDDPSDE…LQEEGLLSDG (63 aa)) are disordered. The span at 1354–1366 (LEGLQEEGLLSDG) shows a compositional bias: low complexity.

This sequence belongs to the RNA polymerase beta' chain family. RpoC2 subfamily. As to quaternary structure, in cyanobacteria the RNAP catalytic core is composed of 2 alpha, 1 beta, 1 beta', 1 gamma and 1 omega subunit. When a sigma factor is associated with the core the holoenzyme is formed, which can initiate transcription. Zn(2+) serves as cofactor.

It catalyses the reaction RNA(n) + a ribonucleoside 5'-triphosphate = RNA(n+1) + diphosphate. Its function is as follows. DNA-dependent RNA polymerase catalyzes the transcription of DNA into RNA using the four ribonucleoside triphosphates as substrates. The sequence is that of DNA-directed RNA polymerase subunit beta' from Prochlorococcus marinus subsp. pastoris (strain CCMP1986 / NIES-2087 / MED4).